The primary structure comprises 135 residues: Large ribosomal subunit protein uL16c (135 aa).

Met1 bears the N-methylmethionine mark.

Component of the chloroplast large ribosomal subunit (LSU). Mature 70S chloroplast ribosomes of higher plants consist of a small (30S) and a large (50S) subunit. The 30S small subunit contains 1 molecule of ribosomal RNA (16S rRNA) and 24 different proteins. The 50S large subunit contains 3 rRNA molecules (23S, 5S and 4.5S rRNA) and 33 different proteins. Post-translationally, partially alpha-N-monomethylated at Met-1 (10%), whereas 90% of it is blocked to Edman degradation, probably by trimethylation.

The protein resides in the plastid. Its subcellular location is the chloroplast. Component of the chloroplast ribosome (chloro-ribosome), a dedicated translation machinery responsible for the synthesis of chloroplast genome-encoded proteins, including proteins of the transcription and translation machinery and components of the photosynthetic apparatus. In Spinacia oleracea (Spinach), this protein is Large ribosomal subunit protein uL16c.